The primary structure comprises 395 residues: MRSPSAAWLLGGVLLLAASGSCNRTVPGNKSKGRSLIGNVDNSPVVAGRGVTVKPGFSVDEFSTSVLTGKLTTVFLPVVYTIVFVVGLPSNGMALWVFLFRTKKKHPAVIYMANLALADLLSVTWFPLKIAYHIHGNNWIYGESLCKVLIGFFYGNMYCSILFMTCLSVQRYWVIVNPMVHPKKQANIAIGVSLGIWLLILLLTIPLYVVKQTSYIRALNITTCHDVLPEEVLVGDMFNYFLSLAIGVFLFPAFLTASAYVLMIRTLQSSAMDESSGKKRRRAIKLIVTVLAMYLICFTPSNLLLVVHYFLIKTRGQSHVYALYIVALCLSTLNSCIDPFVYYFISQDFRDHAKNALLCRSVRTVKRMQVSLSSKKFSGKSSSYSSSSTSVKGSY.

A signal peptide spans 1–25; it reads MRSPSAAWLLGGVLLLAASGSCNRT. Asn23 and Asn29 each carry an N-linked (GlcNAc...) asparagine glycan. The propeptide at 26–34 is removed for receptor activation; that stretch reads VPGNKSKGR. Residues 35–69 lie on the Extracellular side of the membrane; sequence SLIGNVDNSPVVAGRGVTVKPGFSVDEFSTSVLTG. A helical membrane pass occupies residues 70–99; the sequence is KLTTVFLPVVYTIVFVVGLPSNGMALWVFL. Over 100–106 the chain is Cytoplasmic; sequence FRTKKKH. A helical membrane pass occupies residues 107-135; that stretch reads PAVIYMANLALADLLSVTWFPLKIAYHIH. Residues 136 to 147 lie on the Extracellular side of the membrane; that stretch reads GNNWIYGESLCK. Cys146 and Cys224 are joined by a disulfide. The chain crosses the membrane as a helical span at residues 148–175; it reads VLIGFFYGNMYCSILFMTCLSVQRYWVI. The Cytoplasmic segment spans residues 176 to 181; the sequence is VNPMVH. A helical transmembrane segment spans residues 182-209; it reads PKKQANIAIGVSLGIWLLILLLTIPLYV. Residues 210–233 lie on the Extracellular side of the membrane; the sequence is VKQTSYIRALNITTCHDVLPEEVL. Asn220 carries N-linked (GlcNAc...) asparagine glycosylation. The helical transmembrane segment at 234-267 threads the bilayer; it reads VGDMFNYFLSLAIGVFLFPAFLTASAYVLMIRTL. Residues 268–275 lie on the Cytoplasmic side of the membrane; it reads QSSAMDES. Residues 276 to 315 traverse the membrane as a helical segment; it reads SGKKRRRAIKLIVTVLAMYLICFTPSNLLLVVHYFLIKTR. Residues 316 to 321 lie on the Extracellular side of the membrane; sequence GQSHVY. Residues 322-345 traverse the membrane as a helical segment; sequence ALYIVALCLSTLNSCIDPFVYYFI. Residues 346 to 395 are Cytoplasmic-facing; sequence SQDFRDHAKNALLCRSVRTVKRMQVSLSSKKFSGKSSSYSSSSTSVKGSY. Residue Cys359 is the site of S-palmitoyl cysteine attachment.

It belongs to the G-protein coupled receptor 1 family. Interacts with TLR4, COPS5 and TMED2. Interacts with GNAQ, GNA11, GNA12, GNA13 and GNA14. Post-translationally, a proteolytic cleavage generates a new N-terminus that functions as a tethered ligand. Activating serine proteases include trypsin, mast cell tryptase, coagulation factors VII and Xa, myeloblastin/PRTN3 and membrane-type serine protease 1/ST14. Proposed subsequent cleavage by serine proteases is leading to receptor deactivation and include neutrophil elastase and cathepsin G. At least in part, implicated proteases are also shown to activate the receptor; the glycosylation status of the receptor is thought to contribute to the difference. In terms of processing, N-glycosylated and sialylated. Multiple phosphorylated on serine and threonine residues in the cytoplasmic region upon receptor activation; required for receptor desensitization and recruitment of beta-arrestin. Post-translationally, monoubiquitinated by CBL at the plasma membrane and in early endosomes; not required for receptor endocytosis but for translocation to late endosomes or lysosomes. Deubiquitination involves STAMBP and USP8; required for lysosomal trafficking and receptor degradation.

It is found in the cell membrane. Its function is as follows. Receptor for trypsin and trypsin-like enzymes coupled to G proteins. Its function is mediated through the activation of several signaling pathways including phospholipase C (PLC), intracellular calcium, mitogen-activated protein kinase (MAPK), I-kappaB kinase/NF-kappaB and Rho. Can also be transactivated by cleaved F2R/PAR1. Involved in modulation of inflammatory responses and regulation of innate and adaptive immunity, and acts as a sensor for proteolytic enzymes generated during infection. Generally is promoting inflammation. Can signal synergistically with TLR4 and probably TLR2 in inflammatory responses and modulates TLR3 signaling. Has a protective role in establishing the endothelial barrier; the activity involves coagulation factor X. Regulates endothelial cell barrier integrity during neutrophil extravasation, probably following proteolytic cleavage by PRTN3. Proposed to have a bronchoprotective role in airway epithelium, but also shown to compromise the airway epithelial barrier by interrupting E-cadherin adhesion. Involved in the regulation of vascular tone; activation results in hypotension presumably mediated by vasodilation. Associates with a subset of G proteins alpha subunits such as GNAQ, GNA11, GNA14, GNA12 and GNA13, but probably not with G(o) alpha, G(i) subunit alpha-1 and G(i) subunit alpha-2. Believed to be a class B receptor which internalizes as a complex with arrestin and traffic with it to endosomal vesicles, presumably as desensitized receptor, for extended periods of time. Mediates inhibition of TNF-alpha stimulated JNK phosphorylation via coupling to GNAQ and GNA11; the function involves dissociation of RIPK1 and TRADD from TNFR1. Mediates phosphorylation of nuclear factor NF-kappa-B RELA subunit at 'Ser-536'; the function involves IKBKB and is predominantly independent of G proteins. Involved in cellular migration. Involved in cytoskeletal rearrangement and chemotaxis through beta-arrestin-promoted scaffolds; the function is independent of GNAQ and GNA11 and involves promotion of cofilin dephosphorylation and actin filament severing. Induces redistribution of COPS5 from the plasma membrane to the cytosol and activation of the JNK cascade is mediated by COPS5. Involved in the recruitment of leukocytes to the sites of inflammation and is the major PAR receptor capable of modulating eosinophil function such as pro-inflammatory cytokine secretion, superoxide production and degranulation. During inflammation promotes dendritic cell maturation, trafficking to the lymph nodes and subsequent T-cell activation. Involved in antimicrobial response of innate immune cells; activation enhances phagocytosis of Gram-positive and killing of Gram-negative bacteria. Acts synergistically with interferon-gamma in enhancing antiviral responses. Probably mediates activation of pro-inflammatory and pro-fibrotic responses in fibroblasts, triggered by coagulation factor Xa (F10). Probably mediates activation of barrier protective signaling responses in endothelial cells, triggered by coagulation factor Xa (F10). In Bos taurus (Bovine), this protein is Proteinase-activated receptor 2 (F2RL1).